The primary structure comprises 379 residues: Transcription factor TIP2 (379 aa).

Residues 144-184 (MVGPFESSPTPRSGGGRKRSRATAGFHGGGPANGVEKKEKQ) are disordered. Residues 173–186 (GPANGVEKKEKQRR) form a basic motif; degenerate region. The bHLH domain maps to 173-222 (GPANGVEKKEKQRRLRLTEKYNALMLLIPNRTKEDRATVISDAIEYIQEL). Residues 187–222 (LRLTEKYNALMLLIPNRTKEDRATVISDAIEYIQEL) are helix-loop-helix motif.

Belongs to the bHLH protein family. As to quaternary structure, homodimer. Interacts with TDR, but not with EAT1. Highly expressed in anthers; strong expression in the middle layer and tapetum, and weak expression in the endothecium.

The protein resides in the nucleus. Transcription factor that binds to the E-box-containing promoter regions of the transcription factors TDR and EAT1, activating their expression. May have a role in specifying the cell pattern of the inner anther walls and functioning in meiosis progression. Required for male reproduction. Acts downstream of UDT1 and GAMYB, but upstream of TDR1 and EAT1 in pollen development. This is Transcription factor TIP2 (TIP2) from Oryza sativa subsp. japonica (Rice).